Reading from the N-terminus, the 465-residue chain is E3 ubiquitin-protein ligase TRIM15 (465 aa).

Residues 16-61 (CTLCVGPLEDAVTAPCGHTFCRLCLPTLSQMGAQSSGKILLCPLCQ) form an RING-type zinc finger. The segment at 78–119 (LGETYCEEHGEKIYFFCENDAEFLCVFCREGPTHQAHTVGFL) adopts a B box-type zinc-finger fold. Zn(2+) contacts are provided by Cys-83, His-86, Cys-105, and His-111. Residues 126–229 (YRDRLRSRLE…VKELEEKCQQ (104 aa)) adopt a coiled-coil conformation. In terms of domain architecture, B30.2/SPRY spans 276–465 (EMMRMFSENL…KKGSCLTLKG (190 aa)).

The protein belongs to the TRIM/RBCC family. As to quaternary structure, interacts with paxillin/PXN; this interaction recruits TRIM15 to focal adhesions. Interacts with TRIM8; this interaction prevents TRIM8 cytoplasmic translocation.

It localises to the cytoplasm. Its subcellular location is the nucleus. It is found in the cell junction. The protein resides in the focal adhesion. It carries out the reaction S-ubiquitinyl-[E2 ubiquitin-conjugating enzyme]-L-cysteine + [acceptor protein]-L-lysine = [E2 ubiquitin-conjugating enzyme]-L-cysteine + N(6)-ubiquitinyl-[acceptor protein]-L-lysine.. Its function is as follows. E3 ubiquitin ligase that plays a role in several processes including innate antiviral immnity, cell migration and chemotaxis. Acts as a 'Lys-63'-specific ubiquitin ligase for MAPK1/ERK2 and MAPK3/ERK1, promoting their activation by facilitating their interaction with MAP2K1 and MAP2K2. Also plays a role in cell migration and chemotaxis by acting as a stable focal adhesion component upon recruitment by multi-adapter protein paxillin/PXN. Functions in the RIGI-mediated interferon induction pathway upstream or at the level of MAVS. Inhibits NF-kappa-B activation by turnover of 'Lys-63'-linked ubiquitination of MAP3K7/TAK1. Mechanistically, prevents TRIM8 cytoplasmic translocation and thus inhibits TRIM8-mediated 'Lys-63'-linked polyubiquitination of MAP3K7/TAK1 in the cytoplasm. Also has an important regulatory effect on the activation of hepatic stellate cells (HSCs). This chain is E3 ubiquitin-protein ligase TRIM15 (TRIM15), found in Macaca mulatta (Rhesus macaque).